A 109-amino-acid chain; its full sequence is Putative transposase MJ0856.1 (109 aa).

Residues cysteine 36, cysteine 39, cysteine 62, and cysteine 65 each coordinate Zn(2+).

This sequence belongs to the transposase 35 family.

This Methanocaldococcus jannaschii (strain ATCC 43067 / DSM 2661 / JAL-1 / JCM 10045 / NBRC 100440) (Methanococcus jannaschii) protein is Putative transposase MJ0856.1.